The sequence spans 436 residues: UPF0597 protein YhaM (436 aa).

It belongs to the UPF0597 family.

The protein is UPF0597 protein YhaM of Salmonella typhi.